The following is a 252-amino-acid chain: MAFFRRLILMIQFLTRIPIKYESDITTEDFGKALALVPIVGLIIGGIMGVTYMLLVKVFFYKISAVLVLIEYIFLTGGIHLDGLGDTFDGVFSNRPKERILEIMRDSRVGTNAVLAVISVIILNYVILTEIDPAYMVKVIILFPVAGRLGSIVSASLSTYARRGEGMGKSFIDYCTLKELAIGIILYAVIFLSVGLSRGYIIMIFPILTAVILIKYFTRKIGGATGDILGAVCELNQTFYLMTVYAVLYFRG.

The next 7 helical transmembrane spans lie at 36 to 56, 59 to 79, 109 to 129, 133 to 153, 170 to 192, 199 to 218, and 228 to 248; these read LVPIVGLIIGGIMGVTYMLLV, FFYKISAVLVLIEYIFLTGGI, VGTNAVLAVISVIILNYVILT, PAYMVKVIILFPVAGRLGSIV, SFIDYCTLKELAIGIILYAVIFL, GYIIMIFPILTAVILIKYFT, and ILGAVCELNQTFYLMTVYAVL.

The protein belongs to the CobS family. Mg(2+) serves as cofactor.

Its subcellular location is the cell membrane. The catalysed reaction is alpha-ribazole + adenosylcob(III)inamide-GDP = adenosylcob(III)alamin + GMP + H(+). The enzyme catalyses alpha-ribazole 5'-phosphate + adenosylcob(III)inamide-GDP = adenosylcob(III)alamin 5'-phosphate + GMP + H(+). It functions in the pathway cofactor biosynthesis; adenosylcobalamin biosynthesis; adenosylcobalamin from cob(II)yrinate a,c-diamide: step 7/7. Functionally, joins adenosylcobinamide-GDP and alpha-ribazole to generate adenosylcobalamin (Ado-cobalamin). Also synthesizes adenosylcobalamin 5'-phosphate from adenosylcobinamide-GDP and alpha-ribazole 5'-phosphate. The protein is Adenosylcobinamide-GDP ribazoletransferase of Clostridium acetobutylicum (strain ATCC 824 / DSM 792 / JCM 1419 / IAM 19013 / LMG 5710 / NBRC 13948 / NRRL B-527 / VKM B-1787 / 2291 / W).